Here is a 605-residue protein sequence, read N- to C-terminus: UvrABC system protein C (605 aa).

In terms of domain architecture, GIY-YIG spans 14–92 (QSCGVYKMVG…IKSLKPLYNI (79 aa)). The region spanning 202 to 237 (KEVKEQLLFTMRKCSSEENYELAAIYRDRVKFLEQI) is the UVR domain.

The protein belongs to the UvrC family. Interacts with UvrB in an incision complex.

It is found in the cytoplasm. In terms of biological role, the UvrABC repair system catalyzes the recognition and processing of DNA lesions. UvrC both incises the 5' and 3' sides of the lesion. The N-terminal half is responsible for the 3' incision and the C-terminal half is responsible for the 5' incision. This Wolbachia pipientis wMel protein is UvrABC system protein C.